Consider the following 379-residue polypeptide: Cobalt-precorrin-5B C(1)-methyltransferase (379 aa).

This sequence belongs to the CbiD family.

It carries out the reaction Co-precorrin-5B + S-adenosyl-L-methionine = Co-precorrin-6A + S-adenosyl-L-homocysteine. Its pathway is cofactor biosynthesis; adenosylcobalamin biosynthesis; cob(II)yrinate a,c-diamide from sirohydrochlorin (anaerobic route): step 6/10. Its function is as follows. Catalyzes the methylation of C-1 in cobalt-precorrin-5B to form cobalt-precorrin-6A. This is Cobalt-precorrin-5B C(1)-methyltransferase from Salmonella schwarzengrund (strain CVM19633).